Here is a 20-residue protein sequence, read N- to C-terminus: GMP synthase [glutamine-hydrolyzing] (20 aa).

A GMPS ATP-PPase domain is found at 1–20; it reads ALGDQLLSVFVDHTLVDEVA.

Homodimer.

It catalyses the reaction XMP + L-glutamine + ATP + H2O = GMP + L-glutamate + AMP + diphosphate + 2 H(+). It participates in purine metabolism; GMP biosynthesis; GMP from XMP (L-Gln route): step 1/1. In terms of biological role, catalyzes the synthesis of GMP from XMP. The sequence is that of GMP synthase [glutamine-hydrolyzing] (guaA) from Fructilactobacillus sanfranciscensis (Lactobacillus sanfranciscensis).